The primary structure comprises 281 residues: MAGVTAIEIPQWIQDNQGDFVPPVCNKCMFSDQLKVFYVGGPNQRKDFHLEEGEEFFFQRKGDMVLKVIEKGQVRDLVIKQGEMFMLPARVEHSPQRFANSIGLVVERERKNTEFDCVRFLVGSSNVTLFERWFFLTDVVKDLPPLIKEFYNSNEFKTGKPGKGTFACNAPYEARWTDLPVPINRKEFIYDHISEVKNGPVKIYGAPEYKTEVMLLGEGSYDLEAGAVELIIWLQENTFAVVEESGFTYALKSETMVRIKPNTKCLLNVKGGFAITIRMPG.

The tract at residues 1–162 (MAGVTAIEIP…SNEFKTGKPG (162 aa)) is domain A (catalytic). Arg45 contacts O2. Positions 49, 55, and 93 each coordinate Fe cation. Residue Glu55 coordinates substrate. Substrate contacts are provided by Arg97 and Glu107. The segment at 163–179 (KGTFACNAPYEARWTDL) is linker. Residues 180–281 (PVPINRKEFI…GFAITIRMPG (102 aa)) are domain B.

It belongs to the 3-HAO family. Fe(2+) serves as cofactor.

The protein resides in the cytoplasm. The catalysed reaction is 3-hydroxyanthranilate + O2 = (2Z,4Z)-2-amino-3-carboxymuconate 6-semialdehyde. It participates in cofactor biosynthesis; NAD(+) biosynthesis; quinolinate from L-kynurenine: step 3/3. Catalyzes the oxidative ring opening of 3-hydroxyanthranilate to 2-amino-3-carboxymuconate semialdehyde, which spontaneously cyclizes to quinolinate. This Caenorhabditis briggsae protein is 3-hydroxyanthranilate 3,4-dioxygenase (haao-1).